The sequence spans 392 residues: 5-amino-6-(D-ribitylamino)uracil--L-tyrosine 4-hydroxyphenyl transferase (392 aa).

Residues 60 to 307 (VTYVVNRNIN…MAIARLYLGK (248 aa)) form the Radical SAM core domain. [4Fe-4S] cluster contacts are provided by Cys-74, Cys-78, and Cys-81.

The protein belongs to the radical SAM superfamily. CofH family. In terms of assembly, consists of two subunits, CofG and CofH. [4Fe-4S] cluster serves as cofactor.

The enzyme catalyses 5-amino-6-(D-ribitylamino)uracil + L-tyrosine + S-adenosyl-L-methionine = 5-amino-5-(4-hydroxybenzyl)-6-(D-ribitylimino)-5,6-dihydrouracil + 2-iminoacetate + 5'-deoxyadenosine + L-methionine + H(+). It participates in cofactor biosynthesis; coenzyme F0 biosynthesis. Catalyzes the radical-mediated synthesis of 5-amino-5-(4-hydroxybenzyl)-6-(D-ribitylimino)-5,6-dihydrouracil from 5-amino-6-(D-ribitylamino)uracil and L-tyrosine. This is 5-amino-6-(D-ribitylamino)uracil--L-tyrosine 4-hydroxyphenyl transferase from Synechocystis sp. (strain ATCC 27184 / PCC 6803 / Kazusa).